The chain runs to 466 residues: NADH-quinone oxidoreductase subunit N (466 aa).

Helical transmembrane passes span 9–29 (LIPL…GAIV), 33–53 (CGTV…MLAP), 68–88 (PFTR…LLLA), 100–120 (EEYP…ASAA), 122–142 (FLTL…LVAY), 157–177 (LLMG…LYGA), 190–210 (SAAG…GLAF), 232–252 (VVAF…LLIL), 263–283 (APLW…ALLQ), 289–309 (MLAY…LSGG), 314–334 (AAAF…GALA), 359–379 (GVVL…VGFV), 394–416 (APLA…RVVV), and 438–458 (LSLG…GPLF).

It belongs to the complex I subunit 2 family. As to quaternary structure, NDH-1 is composed of 14 different subunits. Subunits NuoA, H, J, K, L, M, N constitute the membrane sector of the complex.

Its subcellular location is the cell inner membrane. It carries out the reaction a quinone + NADH + 5 H(+)(in) = a quinol + NAD(+) + 4 H(+)(out). Its function is as follows. NDH-1 shuttles electrons from NADH, via FMN and iron-sulfur (Fe-S) centers, to quinones in the respiratory chain. The immediate electron acceptor for the enzyme in this species is believed to be ubiquinone. Couples the redox reaction to proton translocation (for every two electrons transferred, four hydrogen ions are translocated across the cytoplasmic membrane), and thus conserves the redox energy in a proton gradient. The sequence is that of NADH-quinone oxidoreductase subunit N from Geobacter metallireducens (strain ATCC 53774 / DSM 7210 / GS-15).